A 446-amino-acid chain; its full sequence is Histidine--tRNA ligase (446 aa).

Belongs to the class-II aminoacyl-tRNA synthetase family. As to quaternary structure, homodimer.

The protein localises to the cytoplasm. The enzyme catalyses tRNA(His) + L-histidine + ATP = L-histidyl-tRNA(His) + AMP + diphosphate + H(+). This chain is Histidine--tRNA ligase, found in Paraburkholderia phytofirmans (strain DSM 17436 / LMG 22146 / PsJN) (Burkholderia phytofirmans).